Reading from the N-terminus, the 81-residue chain is Large ribosomal subunit protein bL31B (81 aa).

The protein belongs to the bacterial ribosomal protein bL31 family. Type B subfamily. As to quaternary structure, part of the 50S ribosomal subunit.

In Oceanobacillus iheyensis (strain DSM 14371 / CIP 107618 / JCM 11309 / KCTC 3954 / HTE831), this protein is Large ribosomal subunit protein bL31B.